Here is a 1027-residue protein sequence, read N- to C-terminus: C2 and GRAM domain-containing protein At5g50170 (1027 aa).

One can recognise a C2 1 domain in the interval 1 to 103; sequence MRLYVYILQA…ENQTLLPTWF (103 aa). Positions 158-167 are enriched in basic and acidic residues; that stretch reads SPKDLISSRD. Disordered regions lie at residues 158–177 and 201–223; these read SPKD…HDGK and LHDE…DQCS. The segment covering 168-177 has biased composition (basic residues); the sequence is GKRRKHHDGK. Over residues 206-223 the composition is skewed to polar residues; the sequence is SVGQSVNSNYEDATDQCS. In terms of domain architecture, VASt 1 spans 253–426; it reads TGGVLVDQKY…LLAKTYKTLD (174 aa). The chain crosses the membrane as a helical span at residues 452–472; the sequence is FLYFWSSSVICAVLLSVYVVV. In terms of domain architecture, C2 2 spans 516–639; that stretch reads TVHFVQARLH…TADELADLSV (124 aa). The GRAM domain maps to 693–756; the sequence is AFQKLFGLPH…LWEDIDDIQV (64 aa). The region spanning 855-1018 is the VASt 2 domain; sequence MMSKVYTCDL…VIFDLFQKES (164 aa).

It localises to the membrane. This Arabidopsis thaliana (Mouse-ear cress) protein is C2 and GRAM domain-containing protein At5g50170.